A 98-amino-acid chain; its full sequence is Large ribosomal subunit protein bL28 (98 aa).

It belongs to the bacterial ribosomal protein bL28 family.

The sequence is that of Large ribosomal subunit protein bL28 from Rhizobium etli (strain ATCC 51251 / DSM 11541 / JCM 21823 / NBRC 15573 / CFN 42).